A 360-amino-acid chain; its full sequence is Ethanolamine-phosphate cytidylyltransferase (360 aa).

CTP is bound by residues 207-208 (GF), 215-218 (HTEA), Lys-243, 291-294 (HGDD), and 321-325 (HTEGL).

It belongs to the cytidylyltransferase family.

It carries out the reaction phosphoethanolamine + CTP + H(+) = CDP-ethanolamine + diphosphate. It participates in phospholipid metabolism; phosphatidylethanolamine biosynthesis; phosphatidylethanolamine from ethanolamine: step 2/3. In terms of biological role, ethanolamine-phosphate cytidylyltransferase that catalyzes the second step in the synthesis of phosphatidylethanolamine (PE) from ethanolamine via the CDP-ethanolamine pathway. The chain is Ethanolamine-phosphate cytidylyltransferase (pctA) from Dictyostelium discoideum (Social amoeba).